The sequence spans 305 residues: MTNKVIVGSRKSKLAMAQTELVIASLEKIFPDIKFEIKNVITEGDRNRHVSLAKIGGKGVFVKEIEDELKDGTIDFAVHSLKDVMPILPEELVLGAFPKRVSPYDCLVSRKNLSSLNDLPKGARIGTNSLRRQGQLLSIRPDLKIIPIRGNIDTRLRKIDTEALDGIILAEAGLTRLNIDLSSYHVLDLQNYIMPAVGQGCLAIECRKNDTRIRKMLDQINDEESAYCVQVEREFMRELGGSCNFPIGGHAYAKNGQILFDGLIASPNGEHVIKETKIPANNSGVGKKVADQLLAKDKFGIIEGE.

S-(dipyrrolylmethanemethyl)cysteine is present on cysteine 243.

Belongs to the HMBS family. As to quaternary structure, monomer. Dipyrromethane serves as cofactor.

The catalysed reaction is 4 porphobilinogen + H2O = hydroxymethylbilane + 4 NH4(+). It functions in the pathway porphyrin-containing compound metabolism; protoporphyrin-IX biosynthesis; coproporphyrinogen-III from 5-aminolevulinate: step 2/4. Functionally, tetrapolymerization of the monopyrrole PBG into the hydroxymethylbilane pre-uroporphyrinogen in several discrete steps. In Limosilactobacillus reuteri (strain DSM 20016) (Lactobacillus reuteri), this protein is Porphobilinogen deaminase.